We begin with the raw amino-acid sequence, 148 residues long: Snaclec convulxin subunit beta (148 aa).

The first 23 residues, M1–A23, serve as a signal peptide directing secretion. Cystine bridges form between C27–C38, C55–C144, and C121–C136. Residues Y34–A148 form the C-type lectin domain.

This sequence belongs to the snaclec family. Tetramer of heterodimers of alpha and beta subunits (alphabeta)(4); disulfide-linked. As to expression, expressed by the venom gland.

The protein resides in the secreted. Functionally, snake venom lectin that activates platelets by binding to the platelet collagen receptor glycoprotein VI (GP6). The indirect activation of integrin alpha-IIb/beta-3 (ITGA2B/ITGB3) also induced by the toxin is upstream the cytoskeletal translocation of GPIb, FcRgamma (FCER1G) and 14-3-3zeta (YWHAZ). The polypeptide is Snaclec convulxin subunit beta (Crotalus durissus terrificus (South American rattlesnake)).